The following is a 227-amino-acid chain: Transmembrane emp24 domain-containing protein 1 (227 aa).

The N-terminal stretch at 1 to 23 is a signal peptide; the sequence is MMAAGTALGLALWLLLPPVGVGG. The Extracellular segment spans residues 24 to 194; sequence AGPPPIQDGE…LQEGNLERVN (171 aa). Residues 43–125 form the GOLD domain; sequence KQCFYQSAPA…EKLVFFELIF (83 aa). Positions 145-170 form a coiled coil; that stretch reads EILEVKMEDIKESIETMRIRLERSIQ. The helical transmembrane segment at 195 to 215 threads the bilayer; it reads FWSAVNVAVLLLVAVLQVCTL. Topologically, residues 216–227 are cytoplasmic; the sequence is KRFFQDKRPVPM. A COPII vesicle coat-binding motif is present at residues 218–219; that stretch reads FF. The COPI vesicle coat-binding signature appears at 218-227; the sequence is FFQDKRPVPM.

It belongs to the EMP24/GP25L family. Homodimer in endoplasmic reticulum, endoplasmic reticulum-Golgi intermediate compartment and cis-Golgi network. Interacts with IL1RL1. Interacts with RNF26; this interaction is important to modulate innate immune signaling through the cGAS-STING pathway.

It is found in the cell membrane. The protein localises to the endoplasmic reticulum membrane. It localises to the golgi apparatus. The protein resides in the cis-Golgi network membrane. Its subcellular location is the endoplasmic reticulum-Golgi intermediate compartment membrane. In terms of biological role, potential role in vesicular protein trafficking, mainly in the early secretory pathway. May act as a cargo receptor at the lumenal side for incorporation of secretory cargo molecules into transport vesicles and may be involved in vesicle coat formation at the cytoplasmic side. Plays a positive role in IL-33-mediated IL-8 and IL-6 production by interacting with interleukin-33 receptor IL1RL1. Plays also a role in the modulation of innate immune signaling through the cGAS-STING pathway by interacting with RNF26. In Bos taurus (Bovine), this protein is Transmembrane emp24 domain-containing protein 1 (TMED1).